Consider the following 332-residue polypeptide: MIEYVIPKKLKIEEERSETEYYYARYVLSPMEKGYGTTIGNALRRVLLSSIPSVAIVGIRFIKPEKYHEFDTLPGVKEDILEIILNLKRIQLRADVPVRERVKMTVEKRGPGNLTAADIKVPAGFEIANPSLKIATLDEEADLFFELYAQAGKGFVPAQEMDDHPEIGWIPIDGVFSPVMKVNFRVESARVEKRTDYDKMILEIWTKKTIFPNEALKRAVDILMNHLQIITDSLPEGMPPLTTEFVPISQEEVKVEQTVSEEEAVYSKKIDELELTIRSLNCLRRDKIETIGDLLKRTEEDLLKIKNFGPKSLDEVKQKLLEKFGLSLKKGG.

Residues 1-234 are alpha N-terminal domain (alpha-NTD); it reads MIEYVIPKKL…NHLQIITDSL (234 aa). Residues 264-332 are alpha C-terminal domain (alpha-CTD); that stretch reads AVYSKKIDEL…KFGLSLKKGG (69 aa).

This sequence belongs to the RNA polymerase alpha chain family. Homodimer. The RNAP catalytic core consists of 2 alpha, 1 beta, 1 beta' and 1 omega subunit. When a sigma factor is associated with the core the holoenzyme is formed, which can initiate transcription.

It catalyses the reaction RNA(n) + a ribonucleoside 5'-triphosphate = RNA(n+1) + diphosphate. Its function is as follows. DNA-dependent RNA polymerase catalyzes the transcription of DNA into RNA using the four ribonucleoside triphosphates as substrates. The polypeptide is DNA-directed RNA polymerase subunit alpha (Pseudothermotoga lettingae (strain ATCC BAA-301 / DSM 14385 / NBRC 107922 / TMO) (Thermotoga lettingae)).